The following is a 242-amino-acid chain: MTEITDRYFNDVIARLSGLRDRLAAQMEKAADLIAAAARADRRVYVFGTGHSHMMAEELHYRAGGLAITVPILCGSIMLQDGAVASSHFERIEGAVRPILDRYGIRDGDVLVVVSNSGVNAAPIEAARYAREKGAAIIALTSVAYSNTIARGRTQLLSLADVVLDNDAPSGDAVLEIAGSALKVGPVSTALGVTILNAVFADVAARLVGEGDAPIYLSANMPGSGDINRSLVERYRDHNPHL.

Residues 30 to 214 enclose the SIS domain; that stretch reads AADLIAAAAR…ARLVGEGDAP (185 aa).

It belongs to the UPF0309 family.

This chain is UPF0309 protein BAbS19_II03080, found in Brucella abortus (strain S19).